We begin with the raw amino-acid sequence, 524 residues long: Ribonuclease Y (524 aa).

Residues 3-23 form a helical membrane-spanning segment; the sequence is IVINLFLIIFASVVFFAAGFF. The KH domain occupies 214 to 274; the sequence is ALSVVHIQSD…LRREHAKLTL (61 aa). The 93-residue stretch at 340-432 folds into the HD domain; it reads LLQHSREVAM…VDAANVISLA (93 aa).

It belongs to the RNase Y family.

Its subcellular location is the cell membrane. Functionally, endoribonuclease that initiates mRNA decay. This chain is Ribonuclease Y, found in Chlorobium luteolum (strain DSM 273 / BCRC 81028 / 2530) (Pelodictyon luteolum).